The primary structure comprises 261 residues: MRRTVKDFRNAKGQRLVYLTAYDYPTARLAEAAGVDAILVGDSLGMVVLGYPSTVPVTLEEMLHHTKAARRGAPETFLVADLPYLAYATLDRALLAAERLLKEGGADAVKLEGGEEVAEIVRGLVRAGVPVLGHVGLTPQTASQLGGYKLQGRRPEEAERILKGALALEEAGAYGVVLEMVPARLAKEVTERLSVHTVGIGAGPHTDAQVLVFHDVVGLYGDFKPRFVKRYLEAGRLIQEALSRYAQEVREGVFPGEEHSF.

The Mg(2+) site is built by Asp42 and Asp81. Residues 42–43 (DS), Asp81, and Lys110 contribute to the 3-methyl-2-oxobutanoate site. A Mg(2+)-binding site is contributed by Glu112. Glu179 (proton acceptor) is an active-site residue.

It belongs to the PanB family. Homodecamer; pentamer of dimers. It depends on Mg(2+) as a cofactor.

It is found in the cytoplasm. It carries out the reaction 3-methyl-2-oxobutanoate + (6R)-5,10-methylene-5,6,7,8-tetrahydrofolate + H2O = 2-dehydropantoate + (6S)-5,6,7,8-tetrahydrofolate. The protein operates within cofactor biosynthesis; (R)-pantothenate biosynthesis; (R)-pantoate from 3-methyl-2-oxobutanoate: step 1/2. In terms of biological role, catalyzes the reversible reaction in which hydroxymethyl group from 5,10-methylenetetrahydrofolate is transferred onto alpha-ketoisovalerate to form ketopantoate. This Thermus thermophilus (strain ATCC BAA-163 / DSM 7039 / HB27) protein is 3-methyl-2-oxobutanoate hydroxymethyltransferase.